Here is a 551-residue protein sequence, read N- to C-terminus: Transcription factor 7-like 1-B (551 aa).

Residues 1 to 11 (MPQLNSGGGDE) show a composition bias toward gly residues. The tract at residues 1–61 (MPQLNSGGGD…SENHSSDSDS (61 aa)) is interaction with CTNNB1-A. Disordered regions lie at residues 1-77 (MPQL…EKPR), 183-213 (GTPP…PYYP), 391-474 (WSAR…SLTT), and 492-515 (SPSS…SRPI). Composition is skewed to basic and acidic residues over residues 17–32 (ELIR…EKSP) and 52–77 (SENH…EKPR). Residues 109–312 (LGGHYLPNGA…SPNLSTKSNV (204 aa)) are interaction with AES and TLE4-A. Residues 324-392 (IKKPLNAFML…LHSQLYPSWS (69 aa)) constitute a DNA-binding region (HMG box). Residues 407–416 (KQSPEMENYT) are compositionally biased toward basic and acidic residues. The interval 408–551 (QSPEMENYTK…PLSLVTRSSD (144 aa)) is interaction with CTBP-B. The segment covering 445–464 (SPATPSAALASPAAPAATHS) has biased composition (low complexity). A compositionally biased stretch (polar residues) spans 465 to 474 (EQAQPLSLTT).

The protein belongs to the TCF/LEF family. In terms of assembly, interacts with csnk1e, ctnnb1-A, ctbp-B, dact1-A and gsk3b. May interact with ase and tle4-A. Interacts with tle1-B. Post-translationally, phosphorylated. Phosphorylation by csnk1e promotes binding to ctnnb1-A while phosphorylation by gsk3b may reverse this effect.

The protein localises to the nucleus. In terms of biological role, participates in the Wnt signaling pathway. Binds to DNA and acts as a repressor in the absence of ctnnb1-A and possibly ctnnb1-B, and as an activator in the presence of these proteins. Required early in development for the establishment of the dorsal body axis in response to maternal Wnt signaling. This Xenopus laevis (African clawed frog) protein is Transcription factor 7-like 1-B (tcf7l1-b).